Reading from the N-terminus, the 74-residue chain is uncharacterized protein (74 aa).

Residues 7–26 (IHLYVMASAMSSSPIFFFFQ) form a helical membrane-spanning segment.

Its subcellular location is the membrane. This is an uncharacterized protein from Homo sapiens (Human).